The sequence spans 172 residues: 3-hydroxydecanoyl-[acyl-carrier-protein] dehydratase (172 aa).

The active site involves His71.

It belongs to the thioester dehydratase family. FabA subfamily. As to quaternary structure, homodimer.

The protein resides in the cytoplasm. It catalyses the reaction a (3R)-hydroxyacyl-[ACP] = a (2E)-enoyl-[ACP] + H2O. It carries out the reaction (3R)-hydroxydecanoyl-[ACP] = (2E)-decenoyl-[ACP] + H2O. The enzyme catalyses (2E)-decenoyl-[ACP] = (3Z)-decenoyl-[ACP]. It functions in the pathway lipid metabolism; fatty acid biosynthesis. Its function is as follows. Necessary for the introduction of cis unsaturation into fatty acids. Catalyzes the dehydration of (3R)-3-hydroxydecanoyl-ACP to E-(2)-decenoyl-ACP and then its isomerization to Z-(3)-decenoyl-ACP. Can catalyze the dehydratase reaction for beta-hydroxyacyl-ACPs with saturated chain lengths up to 16:0, being most active on intermediate chain length. The polypeptide is 3-hydroxydecanoyl-[acyl-carrier-protein] dehydratase (Brucella abortus (strain S19)).